The sequence spans 274 residues: Actin-binding protein Smlt3054 (274 aa).

ANK repeat units lie at residues 192–221 and 225–254; these read SGNT…DVAA and HGWA…NPEQ. Residues 251-274 are disordered; the sequence is NPEQPGWRGRTPTRMHRHEQTQAL.

In terms of assembly, exists as a dimer as well as a higher order oligomer.

It localises to the secreted. The protein resides in the periplasm. Directly binds F-actin, which results in thickened and distorted F-actin fibers, and affects cellular F-actin localization. Thus, may be a host effector whose function is to disrupt host actin cytoskeletal structure, which may enhance invasion. In Stenotrophomonas maltophilia (strain K279a), this protein is Actin-binding protein Smlt3054.